Reading from the N-terminus, the 420-residue chain is L-rhamnose isomerase (420 aa).

H262, D294, and D296 together coordinate Mn(2+).

The protein belongs to the rhamnose isomerase family. As to quaternary structure, homotetramer. Mn(2+) serves as cofactor.

It is found in the cytoplasm. The enzyme catalyses L-rhamnopyranose = L-rhamnulose. The protein operates within carbohydrate degradation; L-rhamnose degradation; glycerone phosphate from L-rhamnose: step 1/3. Its function is as follows. Catalyzes the interconversion of L-rhamnose and L-rhamnulose. This Pectobacterium carotovorum subsp. carotovorum (strain PC1) protein is L-rhamnose isomerase.